Consider the following 341-residue polypeptide: MPELNIAIDAMGGDNGPSIVIEALEKAVHRYPDVKFTVVGHEQQLTPLLDKFNLSSHPSINLVHAEQVIEMDDKPGQSLRSKPESSMRVALQSLTDGNCQAMVSGGNTGALMTNAYFTLKTLPGVLRPALMTALPNQTGGKSYLLDLGANASCDSETLFQFGVMGAVAAEYLSGVPAPKISLLNMGEEDIKGNDVVRNAAARLAQCEQLNYIGFIEGNHLFSGRADVVVCDGFVGNVALKSCEGLATFIIDQMRDTLNSHWLYRFFFRFLQKRTHKSWDRLKPDHYNGASLIGLRHVVIKSHGSASAGAFYSAIQQAVAEAHEQLPERIKHRVEAVLSEQL.

It belongs to the PlsX family. As to quaternary structure, homodimer. Probably interacts with PlsY.

The protein localises to the cytoplasm. The catalysed reaction is a fatty acyl-[ACP] + phosphate = an acyl phosphate + holo-[ACP]. Its pathway is lipid metabolism; phospholipid metabolism. In terms of biological role, catalyzes the reversible formation of acyl-phosphate (acyl-PO(4)) from acyl-[acyl-carrier-protein] (acyl-ACP). This enzyme utilizes acyl-ACP as fatty acyl donor, but not acyl-CoA. In Idiomarina loihiensis (strain ATCC BAA-735 / DSM 15497 / L2-TR), this protein is Phosphate acyltransferase.